Here is a 147-residue protein sequence, read N- to C-terminus: Large ribosomal subunit protein uL13 (147 aa).

It belongs to the universal ribosomal protein uL13 family. In terms of assembly, part of the 50S ribosomal subunit.

Functionally, this protein is one of the early assembly proteins of the 50S ribosomal subunit, although it is not seen to bind rRNA by itself. It is important during the early stages of 50S assembly. This chain is Large ribosomal subunit protein uL13, found in Nocardia farcinica (strain IFM 10152).